The primary structure comprises 321 residues: Probable protein phosphatase methylesterase 1 (321 aa).

Residues serine 170, aspartate 195, and histidine 307 contribute to the active site.

This sequence belongs to the AB hydrolase superfamily.

The enzyme catalyses [phosphatase 2A protein]-C-terminal L-leucine methyl ester + H2O = [phosphatase 2A protein]-C-terminal L-leucine + methanol + H(+). Demethylates proteins that have been reversibly carboxymethylated. The protein is Probable protein phosphatase methylesterase 1 (ppme1) of Dictyostelium discoideum (Social amoeba).